Here is a 198-residue protein sequence, read N- to C-terminus: dTTP/UTP pyrophosphatase (198 aa).

D75 acts as the Proton acceptor in catalysis.

Belongs to the Maf family. YhdE subfamily. Requires a divalent metal cation as cofactor.

The protein localises to the cytoplasm. It carries out the reaction dTTP + H2O = dTMP + diphosphate + H(+). The enzyme catalyses UTP + H2O = UMP + diphosphate + H(+). In terms of biological role, nucleoside triphosphate pyrophosphatase that hydrolyzes dTTP and UTP. May have a dual role in cell division arrest and in preventing the incorporation of modified nucleotides into cellular nucleic acids. This chain is dTTP/UTP pyrophosphatase, found in Wolbachia pipientis wMel.